We begin with the raw amino-acid sequence, 376 residues long: Dehydrogenase/reductase SDR family member FEY (376 aa).

Ser2 is modified (N-acetylserine). 61 to 85 contributes to the NAD(+) binding site; it reads VVTGSTSGIGRETARQLAEAGAHVV. Residue Ser199 coordinates substrate. The active-site Proton acceptor is the Tyr227.

Belongs to the short-chain dehydrogenases/reductases (SDR) family. As to expression, expressed in roots, stems, leaves and flowers and, at lower levels, in siliques.

In terms of biological role, putative oxidoreductase. Required for vegetative shoot apex development, especially during leaf positioning and for shoot apical meristem (SAM) maintenance. The polypeptide is Dehydrogenase/reductase SDR family member FEY (Arabidopsis thaliana (Mouse-ear cress)).